Reading from the N-terminus, the 138-residue chain is Small ribosomal subunit protein uS8c (138 aa).

Belongs to the universal ribosomal protein uS8 family. Part of the 30S ribosomal subunit.

The protein resides in the plastid. Its subcellular location is the chloroplast. One of the primary rRNA binding proteins, it binds directly to 16S rRNA central domain where it helps coordinate assembly of the platform of the 30S subunit. In Chlorella vulgaris (Green alga), this protein is Small ribosomal subunit protein uS8c (rps8).